The following is a 441-amino-acid chain: Gamma-glutamyl phosphate reductase (441 aa).

This sequence belongs to the gamma-glutamyl phosphate reductase family.

The protein localises to the cytoplasm. The enzyme catalyses L-glutamate 5-semialdehyde + phosphate + NADP(+) = L-glutamyl 5-phosphate + NADPH + H(+). Its pathway is amino-acid biosynthesis; L-proline biosynthesis; L-glutamate 5-semialdehyde from L-glutamate: step 2/2. Its function is as follows. Catalyzes the NADPH-dependent reduction of L-glutamate 5-phosphate into L-glutamate 5-semialdehyde and phosphate. The product spontaneously undergoes cyclization to form 1-pyrroline-5-carboxylate. The polypeptide is Gamma-glutamyl phosphate reductase (Hydrogenobaculum sp. (strain Y04AAS1)).